The chain runs to 171 residues: Dual specificity protein phosphatase OPG106 (171 aa).

Residues 23–171 enclose the Tyrosine-protein phosphatase domain; it reads SPTIMTRVTN…IIEKYVIDKN (149 aa). Catalysis depends on Cys-110, which acts as the Phosphocysteine intermediate.

This sequence belongs to the protein-tyrosine phosphatase family. Non-receptor class dual specificity subfamily. In terms of assembly, homodimer.

The protein localises to the virion. Its subcellular location is the host cytoplasm. It carries out the reaction O-phospho-L-tyrosyl-[protein] + H2O = L-tyrosyl-[protein] + phosphate. It catalyses the reaction O-phospho-L-seryl-[protein] + H2O = L-seryl-[protein] + phosphate. Serine/tyrosine phosphatase which down-regulates cellular antiviral response by dephosphorylating activated host STAT1 and blocking interferon (IFN)-stimulated innate immune responses. Dephosphorylates the OPG144 protein. This is Dual specificity protein phosphatase OPG106 (OPG106) from Homo sapiens (Human).